A 603-amino-acid polypeptide reads, in one-letter code: MRLSQMLFVTLRDDPADAEIPSHKLLVRAGFIRRLGSGLYAYLPLIWRVLEKVKRIVQEEMNRTGAQECLLPQLQPSELWKMSGRWDTYTESEGIMFALRDRLERELGLGPTHEEVITAIAKEMIRSYRQLPVNLYQIQTKFRDEIRPRFGLMRGREFIMKDAYSFHSDEASLKATYGAMDQAYRNIFSRCGLDFRPVDADSGAIGGSGSQEFMVLADAGEDEILYTEDGLYSANVEKAVSLAPDAKPSPFSGYKKQSAPNTATIAKMCQCLDCDASNVVKNVLYQAVYNSGKAVLVLVSIRGDQEVNEVKLTNELTKLAPHYESTNILSLTVPDEKEQQKWAAKPLPLGYISPGISDDYIATNKQVADKFLRLVDQTAVDLTNFATGADAVDYHVTGANWSTDFTLPKLVVDVRKALAGDRPVHDPTGELKTARGIEVGHIFQLGTKYSQAMGATFTNEQGEEKPLVMGCYGIGVSRLAQAAVEQSYDKDGIIWPTAIAPYEVVIVVPNVGDEEQMQVAEQIYTEFQAAEVDVLLDDRNERAGVKFKDSELIGIPYRVVTGKSLKQGQLEVVKRADKSVQNLAIAAVVPTLTAWIKAEKKTS.

It belongs to the class-II aminoacyl-tRNA synthetase family. ProS type 1 subfamily. In terms of assembly, homodimer.

The protein resides in the cytoplasm. It catalyses the reaction tRNA(Pro) + L-proline + ATP = L-prolyl-tRNA(Pro) + AMP + diphosphate. In terms of biological role, catalyzes the attachment of proline to tRNA(Pro) in a two-step reaction: proline is first activated by ATP to form Pro-AMP and then transferred to the acceptor end of tRNA(Pro). As ProRS can inadvertently accommodate and process non-cognate amino acids such as alanine and cysteine, to avoid such errors it has two additional distinct editing activities against alanine. One activity is designated as 'pretransfer' editing and involves the tRNA(Pro)-independent hydrolysis of activated Ala-AMP. The other activity is designated 'posttransfer' editing and involves deacylation of mischarged Ala-tRNA(Pro). The misacylated Cys-tRNA(Pro) is not edited by ProRS. The chain is Proline--tRNA ligase from Synechocystis sp. (strain ATCC 27184 / PCC 6803 / Kazusa).